The chain runs to 155 residues: Photosystem I reaction center subunit XI (155 aa).

Transmembrane regions (helical) follow at residues 80 to 102 and 117 to 139; these read LISG…LVSF and GWSQ…AFFL.

It belongs to the PsaL family.

It localises to the cellular thylakoid membrane. The protein is Photosystem I reaction center subunit XI of Thermosynechococcus vestitus (strain NIES-2133 / IAM M-273 / BP-1).